The following is a 70-amino-acid chain: Large ribosomal subunit protein eL38 (70 aa).

The protein belongs to the eukaryotic ribosomal protein eL38 family.

This is Large ribosomal subunit protein eL38 (RpL38) from Drosophila melanogaster (Fruit fly).